The sequence spans 83 residues: RNA-binding protein Hfq (83 aa).

Residues 9–68 (DPFLNALRKERIPVSIYLVNGIKLQGQVESFDQFVILLKNTVSQMVYKHAISTVVPSRAL) form the Sm domain.

It belongs to the Hfq family. As to quaternary structure, homohexamer.

RNA chaperone that binds small regulatory RNA (sRNAs) and mRNAs to facilitate mRNA translational regulation in response to envelope stress, environmental stress and changes in metabolite concentrations. Also binds with high specificity to tRNAs. This chain is RNA-binding protein Hfq, found in Pseudoalteromonas atlantica (strain T6c / ATCC BAA-1087).